An 894-amino-acid chain; its full sequence is Interleukin enhancer-binding factor 3 (894 aa).

Positions 5–378 (RIFVNDDRHV…PMKRPMEEDG (374 aa)) constitute a DZF domain. The interval 50-86 (DEQEKGSSEQAESDNMDVPPEDDSKEGAGEQKTEHMT) is disordered. Residues 60-73 (AESDNMDVPPEDDS) show a composition bias toward acidic residues. At Ser62 the chain carries Phosphoserine. Over residues 74 to 86 (KEGAGEQKTEHMT) the composition is skewed to basic and acidic residues. At Lys100 the chain carries N6-acetyllysine. At Thr188 the chain carries Phosphothreonine; by PKR. Ser190 is subject to Phosphoserine. Lys297 participates in a covalent cross-link: Glycyl lysine isopeptide (Lys-Gly) (interchain with G-Cter in ubiquitin). The residue at position 315 (Thr315) is a Phosphothreonine; by PKR. Residue Lys348 forms a Glycyl lysine isopeptide (Lys-Gly) (interchain with G-Cter in SUMO1) linkage. A disordered region spans residues 363 to 401 (TTYAITPMKRPMEEDGEEKSPSKKKKKIQKKEEKAEPPQ). Residues 371 to 389 (KRPMEEDGEEKSPSKKKKK) carry the Bipartite nuclear localization signal motif. Over residues 372–383 (RPMEEDGEEKSP) the composition is skewed to basic and acidic residues. A phosphoserine mark is found at Ser382 and Ser384. Lys396 participates in a covalent cross-link: Glycyl lysine isopeptide (Lys-Gly) (interchain with G-Cter in SUMO2). One can recognise a DRBM 1 domain in the interval 398-467 (EPPQAMNALM…AVKVLQDMGL (70 aa)). Lys460 bears the N6-acetyllysine mark. The tract at residues 466 to 524 (GLPTGAEGRDSSKGEDSAEETEAKPAVVAPAPVVEAVSTPSAAFPSDATAEQGPILTKH) is disordered. Basic and acidic residues predominate over residues 472-481 (EGRDSSKGED). 3 positions are modified to phosphoserine: Ser476, Ser477, and Ser482. A Glycyl lysine isopeptide (Lys-Gly) (interchain with G-Cter in SUMO2) cross-link involves residue Lys489. Over residues 489 to 508 (KPAVVAPAPVVEAVSTPSAA) the composition is skewed to low complexity. The 67-residue stretch at 524-590 (HGKNPVMELN…ALAALEKLFP (67 aa)) folds into the DRBM 2 domain. Residue Thr592 is modified to Phosphothreonine. The tract at residues 609 to 894 (RGGPKFAAKP…ADHSMNYQYR (286 aa)) is interaction with PRMT1. Disordered stretches follow at residues 625 to 660 (MGGP…FGGA) and 718 to 894 (QGDN…YQYR). Residues 644 to 660 (RGGSIRGRGRGRGFGGA) are compositionally biased toward gly residues. 2 stretches are compositionally biased toward low complexity: residues 743 to 770 (PSYG…YGPP) and 777 to 792 (YNHG…SYNS). Ser792, Ser810, Ser812, and Ser816 each carry phosphoserine. 2 stretches are compositionally biased toward gly residues: residues 811–825 (GSGG…GSGG) and 832–851 (SHGG…GKQG). Polar residues predominate over residues 857-866 (NYNSPGSGQN). Residues 867–878 (YSGPPSSYQSSQ) are compositionally biased toward low complexity.

In terms of assembly, identified in a IGF2BP1-dependent mRNP granule complex containing untranslated mRNAs. Interacts with FUS and SMN. Interacts (via C-terminus) with PRMT1. Forms a complex with ILF2. Can also bind to PRKDC/XRCC7: this may stabilize the interaction of PRKDC/XRCC7 and the heterodimeric complex of XRCC6/KU70 and XRCC5/KU80. Forms a heteromeric complex with ZNF346 and ILF3. Found in a nuclear export complex with XPO5, ILF3, Ran and double-stranded RNA or double-stranded minihelix VA1 RNA. Found in a nuclear export complex with XPO5, RAN, ILF3, ZNF346 and double-stranded RNA. Interacts with XPO5 and ZNF346. Forms a complex with ILF2, YLPM1, KHDRBS1, RBMX, NCOA5 and PPP1CA. Interacts with AGO1 and AGO2. Interacts with DHX36; this interaction occurs in a RNA-dependent manner. Interacts with ELAVL1; this interaction occurs in a RNA-dependent manner. Interacts with HAVCR2; this interaction promotes ILF3 ubiquitination and subsequent degradation. In terms of processing, phosphorylated at Thr-188 and Thr-315 by PKR in response to certain RNA viruses. This phosphorylation results in the dissociation of ILF2 from the ILF2-ILF3 complex resulting in a cytoplasmic sequestration of ILF3 where it can bind to viral RNAs and impede viral replication. Post-translationally, methylated by protein arginine N-methyltransferase 1. Ubiquitinated at Lys-297 in a TRIM47-dependent manner; this 'Lys-48'-linked ubiquitination promotes ILF3 degradation. As to expression, ubiquitous.

It is found in the nucleus. It localises to the nucleolus. The protein localises to the cytoplasm. In terms of biological role, RNA-binding protein that plays an essential role in the biogenesis of circular RNAs (circRNAs) which are produced by back-splicing circularization of pre-mRNAs. Within the nucleus, promotes circRNAs processing by stabilizing the regulatory elements residing in the flanking introns of the circularized exons. Plays thereby a role in the back-splicing of a subset of circRNAs. As a consequence, participates in a wide range of transcriptional and post-transcriptional processes. Binds to poly-U elements and AU-rich elements (AREs) in the 3'-UTR of target mRNAs. Upon viral infection, ILF3 accumulates in the cytoplasm and participates in the innate antiviral response. Mechanistically, ILF3 becomes phosphorylated and activated by the double-stranded RNA-activated protein kinase/PKR which releases ILF3 from cellular mature circRNAs. In turn, unbound ILF3 molecules are able to interact with and thus inhibit viral mRNAs. Functionally, (Microbial infection) Plays a positive role in HIV-1 virus production by binding to and thereby stabilizing HIV-1 RNA, together with ILF3. This is Interleukin enhancer-binding factor 3 (ILF3) from Homo sapiens (Human).